Reading from the N-terminus, the 160-residue chain is Protein Bel-3 (160 aa).

As to quaternary structure, homodimer.

It is found in the host cytoplasm. This Human spumaretrovirus (SFVcpz(hu)) protein is Protein Bel-3 (bel3).